The following is a 529-amino-acid chain: MAELTIRPEEIRDALENFVQSYKPDAASREEVGTVTVAGDGIAKVEGLPSAMANELLKFEDGTLGLALNLEEREIGAVVLGEFSGIEEGQPVHRTGEVLSVAVGEGYLGRVVDPLGNPIDGLGEIETSGRRALELQAPTVMDRKSVHEPMETGYKAVDAMTPIGRGQRQLIIGDRQTGKTALAVDTIINQRDNWRTGDPKKQVRCIYVAIGQKGSTIASVRGALEEAGALEYTTIVAAPASDPAGFKYLAPYTGSAIGQQWMYEGKHVLIIFDDLSKQADAYRAVSLLLRRPPGREAYPGDVFYLHSRLLERCAKLSDDMGAGSMTGLPIVETKANDVSAFIPTNVISITDGQCFLESDLFNAGQRPALNVGISVSRVGGSAQHKAMRQVSGRLRVDLAQFRELEAFAAFGSDLDAASKSQLERGQRMVELLKQAQYQPMPTEDQVVSVWAGTTGKMDDVPVADIRRFEKELLEFLHRKYQGLMTSIKEGAKMSDDTLTAIADAIADFKKQFETSDGKLLGEDVPAAGK.

Glycine 173–threonine 180 lines the ATP pocket.

It belongs to the ATPase alpha/beta chains family. F-type ATPases have 2 components, CF(1) - the catalytic core - and CF(0) - the membrane proton channel. CF(1) has five subunits: alpha(3), beta(3), gamma(1), delta(1), epsilon(1). CF(0) has three main subunits: a(1), b(2) and c(9-12). The alpha and beta chains form an alternating ring which encloses part of the gamma chain. CF(1) is attached to CF(0) by a central stalk formed by the gamma and epsilon chains, while a peripheral stalk is formed by the delta and b chains.

The protein localises to the cell membrane. It catalyses the reaction ATP + H2O + 4 H(+)(in) = ADP + phosphate + 5 H(+)(out). Its function is as follows. Produces ATP from ADP in the presence of a proton gradient across the membrane. The alpha chain is a regulatory subunit. This is ATP synthase subunit alpha from Streptomyces avermitilis (strain ATCC 31267 / DSM 46492 / JCM 5070 / NBRC 14893 / NCIMB 12804 / NRRL 8165 / MA-4680).